Consider the following 273-residue polypeptide: Aegyptin (273 aa).

The first 19 residues, 1–19 (MKPLVKLFLLFCLVGIVLS), serve as a signal peptide directing secretion. Positions 20–160 (RPMPEDEEPV…SEKNDPADTY (141 aa)) are disordered. Residues 24–62 (EDEEPVAEGGDDDASGESEGEEETTDDAGGDGGEEENEG) are compositionally biased toward acidic residues. Positions 63 to 86 (EEHAGDKDAGGEDTGKEENTGHDD) are enriched in basic and acidic residues. Residues 87–145 (AGEEDAGEEDAGEEDAGEEDAGEEDAEKEEGEKEDAGDDAGSDDGEEDSTGGDEGEDNA) are compositionally biased toward acidic residues. The mediates binding of host collagen stretch occupies residues 137–273 (GGDEGEDNAE…IKSCVSSKGR (137 aa)). Basic and acidic residues predominate over residues 146–158 (EDSKGSEKNDPAD). 2 disulfides stabilise this stretch: Cys-213–Cys-267 and Cys-235–Cys-245.

This sequence belongs to the aegyptin family. Monomer; exhibits non-globular elongated shape in solution. Female saliva (at protein level). Adult female salivary gland (at protein level).

It localises to the secreted. Its function is as follows. Modulates blood feeding of female mosquitoes on vertebrate hosts. Inhibits collagen-induced platelet aggregation in the host via preventing collagen interaction with its three major ligands: glycoprotein VI, integrin alpha-2/beta-1 (ITGA2/ITGB1) and von Willebrand factor (VWF). Prevents collagen-mediated thrombus formation in the host. Binds to host collagens but not to laminin, vitronectin (VTN), fibronectin (FN1), von Willebrand factor (VWF) and fibrinogen. Influences cytokine production and populations of circulating leukocytes. In terms of biological role, (Microbial infection) Reduces replication of dengue virus type 2 at inoculation site and viremia levels on day 2 post-inoculation. Promotes production of pro-inflammatory cytokines, such as GM-CSF (CSF2), IFN-gamma (IFNG), IL5 and IL6, in the lymph nodes of mice infected with dengue virus type 2. Increases the number of circulating eosinophils in mice infected with dengue virus type 2. Decreases the number of circulating monocytes in mice infected with dengue virus type 2. The polypeptide is Aegyptin (Aedes aegypti (Yellowfever mosquito)).